Here is a 387-residue protein sequence, read N- to C-terminus: Acetylserotonin O-methyltransferase (387 aa).

S-adenosyl-L-methionine is bound by residues Tyr153, Trp170, Glu216, 246–248, and Arg263; that span reads GDF. The Proton donor/acceptor role is filled by His266. The substrate site is built by Asp267 and Gln317. Residues 355-387 are disordered; it reads ARGGGAGARSDGGGGEATSQTGSGTGREVGAQD. Residues 356–370 are compositionally biased toward gly residues; it reads RGGGAGARSDGGGGE.

Belongs to the class I-like SAM-binding methyltransferase superfamily. Cation-independent O-methyltransferase family. In terms of assembly, homodimer.

It carries out the reaction N-acetylserotonin + S-adenosyl-L-methionine = melatonin + S-adenosyl-L-homocysteine + H(+). The protein operates within aromatic compound metabolism; melatonin biosynthesis; melatonin from serotonin: step 1/2. Catalyzes the transfer of a methyl group onto N-acetylserotonin, producing melatonin (N-acetyl-5-methoxytryptamine). In Mus musculus molossinus (Japanese house mouse), this protein is Acetylserotonin O-methyltransferase (Asmt).